A 438-amino-acid chain; its full sequence is Fibrinogen gamma chain (438 aa).

A signal peptide spans 1 to 25 (MTRLPKQGLLLLQSLALLSSAFGNI). An N-linked (GlcNAc...) asparagine glycan is attached at Asn-76. The Fibrinogen C-terminal domain occupies 167–414 (QIQEFTGKDC…SVTMKIMPLN (248 aa)). Cys-176 and Cys-205 are joined by a disulfide. Residues Asp-341, Asp-343, and Gly-347 each coordinate Ca(2+). Cys-349 and Cys-362 are disulfide-bonded.

In terms of assembly, heterohexamer; disulfide linked. Contains 2 sets of 3 non-identical chains (alpha, beta and gamma). The 2 heterotrimers are in head to head conformation with the N-termini in a small central domain. Conversion of fibrinogen to fibrin is triggered by thrombin, which cleaves fibrinopeptides A and B from alpha and beta chains, and thus exposes the N-terminal polymerization sites responsible for the formation of the soft clot. The soft clot is converted into the hard clot by factor XIIIA which catalyzes the epsilon-(gamma-glutamyl)lysine cross-linking between gamma chains (stronger) and between alpha chains (weaker) of different monomers.

It is found in the secreted. Together with fibrinogen alpha (FGA) and fibrinogen beta (FGB), polymerizes to form an insoluble fibrin matrix. Has a major function in hemostasis as one of the primary components of blood clots. In Xenopus laevis (African clawed frog), this protein is Fibrinogen gamma chain (fgg).